Here is a 95-residue protein sequence, read N- to C-terminus: Pyrimidine/purine nucleoside phosphorylase (95 aa).

The protein belongs to the nucleoside phosphorylase PpnP family.

It carries out the reaction a purine D-ribonucleoside + phosphate = a purine nucleobase + alpha-D-ribose 1-phosphate. The catalysed reaction is adenosine + phosphate = alpha-D-ribose 1-phosphate + adenine. The enzyme catalyses cytidine + phosphate = cytosine + alpha-D-ribose 1-phosphate. It catalyses the reaction guanosine + phosphate = alpha-D-ribose 1-phosphate + guanine. It carries out the reaction inosine + phosphate = alpha-D-ribose 1-phosphate + hypoxanthine. The catalysed reaction is thymidine + phosphate = 2-deoxy-alpha-D-ribose 1-phosphate + thymine. The enzyme catalyses uridine + phosphate = alpha-D-ribose 1-phosphate + uracil. It catalyses the reaction xanthosine + phosphate = alpha-D-ribose 1-phosphate + xanthine. In terms of biological role, catalyzes the phosphorolysis of diverse nucleosides, yielding D-ribose 1-phosphate and the respective free bases. Can use uridine, adenosine, guanosine, cytidine, thymidine, inosine and xanthosine as substrates. Also catalyzes the reverse reactions. This is Pyrimidine/purine nucleoside phosphorylase from Edwardsiella ictaluri (strain 93-146).